The primary structure comprises 1080 residues: Carbamoyl phosphate synthase large chain (1080 aa).

The carboxyphosphate synthetic domain stretch occupies residues 1–403 (MPKRTDLRTI…SLQKAVRGLE (403 aa)). Residues Arg129, Arg169, Gly175, Gly176, Glu208, Val210, Glu215, Gly241, Val242, His243, Gln285, and Glu299 each contribute to the ATP site. Positions 133–328 (RVAMQEIGLE…IAKIAAKLAV (196 aa)) constitute an ATP-grasp 1 domain. Mg(2+) contacts are provided by Gln285, Glu299, and Asn301. The Mn(2+) site is built by Gln285, Glu299, and Asn301. Positions 404-554 (TGKVGLEPTG…YSTYEEECEA (151 aa)) are oligomerization domain. The carbamoyl phosphate synthetic domain stretch occupies residues 555–942 (APSDRRKIMI…AFARAQEAGD (388 aa)). The region spanning 679 to 876 (QRLVQQLGLR…LAKIAARCMT (198 aa)) is the ATP-grasp 2 domain. Residues Arg715, Arg754, Leu756, Glu761, Gly787, Val788, His789, Ser790, Gln830, and Glu847 each coordinate ATP. Positions 830, 847, and 849 each coordinate Mg(2+). Residues Gln830, Glu847, and Asn849 each coordinate Mn(2+). Residues 943–1080 (IRAPQPGRAF…LQELHKELQV (138 aa)) enclose the MGS-like domain. The interval 943-1080 (IRAPQPGRAF…LQELHKELQV (138 aa)) is allosteric domain.

It belongs to the CarB family. In terms of assembly, composed of two chains; the small (or glutamine) chain promotes the hydrolysis of glutamine to ammonia, which is used by the large (or ammonia) chain to synthesize carbamoyl phosphate. Tetramer of heterodimers (alpha,beta)4. The cofactor is Mg(2+). Mn(2+) is required as a cofactor.

It carries out the reaction hydrogencarbonate + L-glutamine + 2 ATP + H2O = carbamoyl phosphate + L-glutamate + 2 ADP + phosphate + 2 H(+). The enzyme catalyses hydrogencarbonate + NH4(+) + 2 ATP = carbamoyl phosphate + 2 ADP + phosphate + 2 H(+). It participates in amino-acid biosynthesis; L-arginine biosynthesis; carbamoyl phosphate from bicarbonate: step 1/1. It functions in the pathway pyrimidine metabolism; UMP biosynthesis via de novo pathway; (S)-dihydroorotate from bicarbonate: step 1/3. In terms of biological role, large subunit of the glutamine-dependent carbamoyl phosphate synthetase (CPSase). CPSase catalyzes the formation of carbamoyl phosphate from the ammonia moiety of glutamine, carbonate, and phosphate donated by ATP, constituting the first step of 2 biosynthetic pathways, one leading to arginine and/or urea and the other to pyrimidine nucleotides. The large subunit (synthetase) binds the substrates ammonia (free or transferred from glutamine from the small subunit), hydrogencarbonate and ATP and carries out an ATP-coupled ligase reaction, activating hydrogencarbonate by forming carboxy phosphate which reacts with ammonia to form carbamoyl phosphate. This chain is Carbamoyl phosphate synthase large chain, found in Xylella fastidiosa (strain Temecula1 / ATCC 700964).